A 113-amino-acid polypeptide reads, in one-letter code: Small ribosomal subunit protein bS6 (113 aa).

Belongs to the bacterial ribosomal protein bS6 family.

In terms of biological role, binds together with bS18 to 16S ribosomal RNA. The polypeptide is Small ribosomal subunit protein bS6 (rpsF) (Buchnera aphidicola subsp. Acyrthosiphon pisum (strain APS) (Acyrthosiphon pisum symbiotic bacterium)).